Consider the following 172-residue polypeptide: C-phycocyanin-2 beta subunit (172 aa).

Asparagine 72 is modified (N4-methylasparagine). Positions 82 and 153 each coordinate (2R,3E)-phycocyanobilin.

The protein belongs to the phycobiliprotein family. Heterodimer of an alpha and a beta subunit, which further assembles into trimers and the trimers into hexamers. Contains two covalently linked bilin chromophores.

The protein localises to the cellular thylakoid membrane. Its function is as follows. Light-harvesting photosynthetic bile pigment-protein from the phycobiliprotein complex (phycobilisome, PBS). Phycocyanin is the major phycobiliprotein in the PBS rod. This is C-phycocyanin-2 beta subunit (cpcB2) from Pseudanabaena tenuis (strain PCC 7409).